A 508-amino-acid polypeptide reads, in one-letter code: Enhancer of mRNA-decapping protein 3 (508 aa).

Residues 1-68 enclose the Sm domain; it reads MAMDWLGSIV…ITELKILEIP (68 aa). The interval 1–79 is required for P-body targeting and interaction with DCP1A; that stretch reads MAMDWLGSIV…PGDNQQVGDL (79 aa). Residues 98 to 194 are disordered; the sequence is NGTGKVVKKP…KNKDDECFGD (97 aa). 4 positions are modified to phosphoserine: serine 131, serine 138, serine 140, and serine 161. Positions 191 to 296 are required for interaction with DDX6; it reads CFGDDIEELP…HKKLLSVAEK (106 aa). The DFDF domain occupies 192-228; it reads FGDDIEELPDTDFDFEGNLALFDKAAVFEEIDTYERR. The YjeF N-terminal domain occupies 283-487; it reads SYELHKKLLS…DIGIPQQVFQ (205 aa).

This sequence belongs to the EDC3 family. Homodimer (via YjeF N-terminal domain). Forms a complex with DCP1A, DCP2, DDX6 and EDC4/HEDLS, within this complex directly interacts with DCP1A and DDX6. Interacts with ZFP36.

The protein resides in the cytoplasm. Its subcellular location is the P-body. Functionally, binds single-stranded RNA. Involved in the process of mRNA degradation and in the positive regulation of mRNA decapping. The sequence is that of Enhancer of mRNA-decapping protein 3 (Edc3) from Mus musculus (Mouse).